We begin with the raw amino-acid sequence, 142 residues long: Hemoglobin subunit pi (142 aa).

The Globin domain occupies 2 to 142; sequence TLTQAEKAAV…VSSVLTEKYR (141 aa). Positions 59 and 88 each coordinate heme b.

It belongs to the globin family.

In terms of biological role, the pi' chain is the counterpart of the alpha chain in the major early embryonic hemoglobin P. The sequence is that of Hemoglobin subunit pi from Cairina moschata (Muscovy duck).